The following is a 429-amino-acid chain: UDP-N-acetylglucosamine 1-carboxyvinyltransferase (429 aa).

22-23 contacts phosphoenolpyruvate; it reads KN. Arg-93 contacts UDP-N-acetyl-alpha-D-glucosamine. Cys-117 acts as the Proton donor in catalysis. At Cys-117 the chain carries 2-(S-cysteinyl)pyruvic acid O-phosphothioketal. Residues 122-126, Asp-307, and Val-329 contribute to the UDP-N-acetyl-alpha-D-glucosamine site; that span reads RPVDL.

It belongs to the EPSP synthase family. MurA subfamily.

The protein localises to the cytoplasm. The catalysed reaction is phosphoenolpyruvate + UDP-N-acetyl-alpha-D-glucosamine = UDP-N-acetyl-3-O-(1-carboxyvinyl)-alpha-D-glucosamine + phosphate. Its pathway is cell wall biogenesis; peptidoglycan biosynthesis. Functionally, cell wall formation. Adds enolpyruvyl to UDP-N-acetylglucosamine. The sequence is that of UDP-N-acetylglucosamine 1-carboxyvinyltransferase from Chloroherpeton thalassium (strain ATCC 35110 / GB-78).